The primary structure comprises 102 residues: Small ribosomal subunit protein uS10 (102 aa).

It belongs to the universal ribosomal protein uS10 family. In terms of assembly, part of the 30S ribosomal subunit.

Functionally, involved in the binding of tRNA to the ribosomes. The polypeptide is Small ribosomal subunit protein uS10 (Geobacillus kaustophilus (strain HTA426)).